The following is a 398-amino-acid chain: MLPRFLTASYPMERHYFMVPKFALSLIGFYPEQKRTVLVKLWSFFNFFILTYGCYAEAYYGIHYIPINIATALDALCPVASSILSLVKMVAIWWYQDELRSLIERVRFLTEQQKSKRKLGYKKRFYTLATQLTFLLLCCGFCTSTSYSVRHLIDNILRRTHGKDWIYETPFKMMFPDLLLRLPLYPITYILVHWHGYITVVCFVGADGFFLGFCLYFTVLLLCLQDDVCDLLEVENIEKSPSEAEEARIVREMEKLVDRHNEVAELTERLSGVMVEITLAHFVTSSLIIGTSVVDILLFSGLGIIVYVVYTCAVGVEIFLYCLGGSHIMEACSNLARSTFSSHWYGHSVRVQKMTLLMVARAQRVLTIKIPFFSPSLETLTSILRFTGSLIALAKSVI.

Over 1-14 the chain is Cytoplasmic; sequence MLPRFLTASYPMER. The chain crosses the membrane as a helical span at residues 15–31; the sequence is HYFMVPKFALSLIGFYP. At 32–46 the chain is on the extracellular side; the sequence is EQKRTVLVKLWSFFN. A helical transmembrane segment spans residues 47–67; sequence FFILTYGCYAEAYYGIHYIPI. Residues 68–74 lie on the Cytoplasmic side of the membrane; that stretch reads NIATALD. A helical membrane pass occupies residues 75 to 95; sequence ALCPVASSILSLVKMVAIWWY. Over 96–124 the chain is Extracellular; that stretch reads QDELRSLIERVRFLTEQQKSKRKLGYKKR. A helical transmembrane segment spans residues 125–145; the sequence is FYTLATQLTFLLLCCGFCTST. Topologically, residues 146-199 are cytoplasmic; the sequence is SYSVRHLIDNILRRTHGKDWIYETPFKMMFPDLLLRLPLYPITYILVHWHGYIT. Residues 200–220 traverse the membrane as a helical segment; it reads VVCFVGADGFFLGFCLYFTVL. Residues 221-269 lie on the Extracellular side of the membrane; it reads LLCLQDDVCDLLEVENIEKSPSEAEEARIVREMEKLVDRHNEVAELTER. The chain crosses the membrane as a helical span at residues 270 to 290; that stretch reads LSGVMVEITLAHFVTSSLIIG. Residues 291–295 lie on the Cytoplasmic side of the membrane; that stretch reads TSVVD. The chain crosses the membrane as a helical span at residues 296–316; that stretch reads ILLFSGLGIIVYVVYTCAVGV. Residues 317–398 lie on the Extracellular side of the membrane; sequence EIFLYCLGGS…SLIALAKSVI (82 aa).

This sequence belongs to the insect chemoreceptor superfamily. Heteromeric odorant receptor channel (TC 1.A.69) family. Or1a subfamily. Interacts with Orco. Complexes exist early in the endomembrane system in olfactory sensory neurons (OSNs), coupling these complexes to the conserved ciliary trafficking pathway. Not expressed in either the antenna or maxillary palp.

The protein resides in the cell membrane. Its function is as follows. Odorant receptor which mediates acceptance or avoidance behavior, depending on its substrates. The odorant receptor repertoire encodes a large collection of odor stimuli that vary widely in identity, intensity, and duration. May form a complex with Orco to form odorant-sensing units, providing sensitive and prolonged odorant signaling and calcium permeability. Involved in the behavioral responses to pentanol, hexanol, octanol, nonanol, propyl acetate, butyl acetate, isoamyl acetate, methyl caproate, anisole, heptanal, 2-heptanone, r-carvone, and nonanoic acid. Also responds to pyrazines. The sequence is that of Odorant receptor 24a (Or24a) from Drosophila melanogaster (Fruit fly).